The following is a 198-amino-acid chain: uncharacterized protein (198 aa).

The segment at 1–23 (MYFGKTRQSDQSGRVPPNQNVTT) is disordered. A compositionally biased stretch (polar residues) spans 9–23 (SDQSGRVPPNQNVTT). Residues C75, H144, and R149 each contribute to the Mo-molybdopterin site.

The cofactor is Mo-molybdopterin.

This is an uncharacterized protein from Bacillus subtilis (strain 168).